We begin with the raw amino-acid sequence, 363 residues long: MVVNFKIFKKASPNNMVTLYMNRREFVDSVTQVEPVDGIVVLDDEYIRQNRKIFVQLICNFRYGREDDEMIGLRFQKELILVSQPVYPEQKIDIQLTKMQERLLKKLGSNAYPFILEMPPSSPASVVLQQKANDSTQPCGVQYFVKVFAGENDCDRSHRRSTVNLGIRKVQYAPTKTGIQPCTVVRKDFLLSPGELELEVTLDRQLYYHGEKISINICVRNNSNKVVKKIKAMVQQGIDVVLFQNGQFRNTIAFAESSEGCPLNPGSSLQKIMYLVPNLAANCDRAGIAVEGDVKHKNTSLASTTLIASQEARDAFGIIVSYAVKVKLFLGALGGELCAELPFILMHPKPSLKAQPEAETEEA.

It belongs to the arrestin family.

The sequence is that of Phosrestin-2 (ARR1) from Calliphora vicina (Blue blowfly).